The following is a 257-amino-acid chain: Aspartate/glutamate leucyltransferase (257 aa).

This sequence belongs to the R-transferase family. Bpt subfamily.

It localises to the cytoplasm. It carries out the reaction N-terminal L-glutamyl-[protein] + L-leucyl-tRNA(Leu) = N-terminal L-leucyl-L-glutamyl-[protein] + tRNA(Leu) + H(+). It catalyses the reaction N-terminal L-aspartyl-[protein] + L-leucyl-tRNA(Leu) = N-terminal L-leucyl-L-aspartyl-[protein] + tRNA(Leu) + H(+). In terms of biological role, functions in the N-end rule pathway of protein degradation where it conjugates Leu from its aminoacyl-tRNA to the N-termini of proteins containing an N-terminal aspartate or glutamate. This is Aspartate/glutamate leucyltransferase from Rhodopseudomonas palustris (strain BisB5).